Here is a 387-residue protein sequence, read N- to C-terminus: Probable tRNA sulfurtransferase (387 aa).

Positions 67 to 167 (SLLKNLFTRL…KEHFLIISES (101 aa)) constitute a THUMP domain. ATP-binding positions include 185–186 (LL), 210–211 (TF), arginine 269, glycine 287, and glutamine 296.

Belongs to the ThiI family.

It is found in the cytoplasm. The enzyme catalyses [ThiI sulfur-carrier protein]-S-sulfanyl-L-cysteine + a uridine in tRNA + 2 reduced [2Fe-2S]-[ferredoxin] + ATP + H(+) = [ThiI sulfur-carrier protein]-L-cysteine + a 4-thiouridine in tRNA + 2 oxidized [2Fe-2S]-[ferredoxin] + AMP + diphosphate. The catalysed reaction is [ThiS sulfur-carrier protein]-C-terminal Gly-Gly-AMP + S-sulfanyl-L-cysteinyl-[cysteine desulfurase] + AH2 = [ThiS sulfur-carrier protein]-C-terminal-Gly-aminoethanethioate + L-cysteinyl-[cysteine desulfurase] + A + AMP + 2 H(+). The protein operates within cofactor biosynthesis; thiamine diphosphate biosynthesis. Its function is as follows. Catalyzes the ATP-dependent transfer of a sulfur to tRNA to produce 4-thiouridine in position 8 of tRNAs, which functions as a near-UV photosensor. Also catalyzes the transfer of sulfur to the sulfur carrier protein ThiS, forming ThiS-thiocarboxylate. This is a step in the synthesis of thiazole, in the thiamine biosynthesis pathway. The sulfur is donated as persulfide by IscS. The sequence is that of Probable tRNA sulfurtransferase from Mycoplasma pneumoniae (strain ATCC 29342 / M129 / Subtype 1) (Mycoplasmoides pneumoniae).